The primary structure comprises 532 residues: CTP synthase (532 aa).

The interval 1–267 is amidoligase domain; that stretch reads MTKYIFVTGG…DDIVLEHLQL (267 aa). Position 13 (S13) interacts with CTP. S13 lines the UTP pocket. Residue 14-19 participates in ATP binding; that stretch reads SIGKGI. Y54 is an L-glutamine binding site. D71 serves as a coordination point for ATP. 2 residues coordinate Mg(2+): D71 and E141. CTP is bound by residues 148-150, 188-193, and K224; these read DIE and KTKPTQ. UTP is bound by residues 188-193 and K224; that span reads KTKPTQ. The region spanning 292-532 is the Glutamine amidotransferase type-1 domain; the sequence is RIGLVGKYVS…DFVGAALNNK (241 aa). G354 serves as a coordination point for L-glutamine. C381 serves as the catalytic Nucleophile; for glutamine hydrolysis. L-glutamine is bound by residues 382-385, E405, and R462; that span reads LGMQ. Active-site residues include H507 and E509.

The protein belongs to the CTP synthase family. As to quaternary structure, homotetramer.

It carries out the reaction UTP + L-glutamine + ATP + H2O = CTP + L-glutamate + ADP + phosphate + 2 H(+). The catalysed reaction is L-glutamine + H2O = L-glutamate + NH4(+). The enzyme catalyses UTP + NH4(+) + ATP = CTP + ADP + phosphate + 2 H(+). It functions in the pathway pyrimidine metabolism; CTP biosynthesis via de novo pathway; CTP from UDP: step 2/2. With respect to regulation, allosterically activated by GTP, when glutamine is the substrate; GTP has no effect on the reaction when ammonia is the substrate. The allosteric effector GTP functions by stabilizing the protein conformation that binds the tetrahedral intermediate(s) formed during glutamine hydrolysis. Inhibited by the product CTP, via allosteric rather than competitive inhibition. In terms of biological role, catalyzes the ATP-dependent amination of UTP to CTP with either L-glutamine or ammonia as the source of nitrogen. Regulates intracellular CTP levels through interactions with the four ribonucleotide triphosphates. This is CTP synthase from Listeria innocua serovar 6a (strain ATCC BAA-680 / CLIP 11262).